A 533-amino-acid chain; its full sequence is Putative phosphate permease jhp_1384 (533 aa).

The next 12 helical transmembrane spans lie at 23 to 43, 47 to 67, 81 to 101, 129 to 149, 156 to 176, 182 to 202, 221 to 241, 248 to 268, 286 to 306, 338 to 358, 372 to 392, and 509 to 529; these read IALA…FGQA, GLLL…IGAN, AISM…GAII, VMLA…LIGA, SVVG…AINW, IVAS…FFLM, VVPY…IVKV, VGFE…FILF, VNEL…FAHG, VPLW…SLYG, LDKM…LLAS, and LVTV…LGFI.

The protein belongs to the inorganic phosphate transporter (PiT) (TC 2.A.20) family.

The protein resides in the cell membrane. Functionally, potential transporter for phosphate. The protein is Putative phosphate permease jhp_1384 of Helicobacter pylori (strain J99 / ATCC 700824) (Campylobacter pylori J99).